The following is a 199-amino-acid chain: MAKTTAAITFVTGNAKKLQEVQQILGQGFPFELTNRKIDLPELQGEPEDISREKCRLAAAEVKGPVMVEDTSLCFNALHGLPGPYIKWFLDKTGHVGLNNLLAAYPDKSAYAQCIFAFTTGPGAEIQTFVGRTEGKIVPARGPTDFGWDPVFQPDGFEETYAEMDKTIKNSISHRGRSLSALCAYFDTHKAELEKQLAA.

Residue 12–17 coordinates ITP; the sequence is TGNAKK. Position 42 (Glu-42) interacts with Mg(2+). ITP is bound by residues Lys-54, 70 to 71, Lys-87, 146 to 149, Lys-169, and 174 to 175; these read DT, FGWD, and HR.

The protein belongs to the HAM1 NTPase family. In terms of assembly, homodimer. Requires Mg(2+) as cofactor. It depends on Mn(2+) as a cofactor.

It is found in the cytoplasm. The catalysed reaction is ITP + H2O = IMP + diphosphate + H(+). The enzyme catalyses dITP + H2O = dIMP + diphosphate + H(+). It carries out the reaction XTP + H2O = XMP + diphosphate + H(+). In terms of biological role, pyrophosphatase that hydrolyzes non-canonical purine nucleotides such as inosine triphosphate (ITP), deoxyinosine triphosphate (dITP) or xanthosine 5'-triphosphate (XTP) to their respective monophosphate derivatives. The enzyme does not distinguish between the deoxy- and ribose forms. Probably excludes non-canonical purines from RNA and DNA precursor pools, thus preventing their incorporation into RNA and DNA and avoiding chromosomal lesions. In Monosiga brevicollis (Choanoflagellate), this protein is Inosine triphosphate pyrophosphatase.